The following is a 412-amino-acid chain: MFWGLIMEPNKRYTQVVEKPFHISQAAMDISTGDNDPCQVMVVVDGKNFLVCTLQKGKIIQVPLDLYFKSGDSVSFLTNGKCNVHLTGYLDPEFEEDLEDEEEAEEEEEEEEAPPLVPAKNKRKLENANDATANKKAKPDKKAGKNSAPAAESDSDDDDEDQLQKFLDGEDIDTDENDESFKMNTSAEGDDSDEEDDDEDEEDEEDDDEDDEEEEEAPKKKKKQPAAEQDSTLDTSKESVDMSKLSKSQKRRLKKKLQQQAKQQPQVNGVDKPKKEEPQQKAEKKKPEAKKEEAPVEKKEKKQIAGGVSIEDLKVGSGPVAKAGKVVMVYYEGRLKQNNKMFDNCVKGPGFKFRLGSKEVISGWDVGIAGMKVGGKRKIVCPPAMAYGAKGSPPVIPPNSTLVFEVDLKNVK.

Acidic residues-rich tracts occupy residues 95 to 113, 169 to 178, and 188 to 216; these read EEDLEDEEEAEEEEEEEEA, GEDIDTDEND, and EGDDSDEEDDDEDEEDEEDDDEDDEEEEE. The interval 95-304 is disordered; it reads EEDLEDEEEA…PVEKKEKKQI (210 aa). The span at 247–257 shows a compositional bias: basic residues; that stretch reads KSQKRRLKKKL. A compositionally biased stretch (basic and acidic residues) spans 271–303; sequence DKPKKEEPQQKAEKKKPEAKKEEAPVEKKEKKQ. The region spanning 324–412 is the PPIase FKBP-type domain; that stretch reads GKVVMVYYEG…VFEVDLKNVK (89 aa).

The protein belongs to the FKBP-type PPIase family. Post-translationally, phosphorylated by a nuclear kinase in the presence of Mg(2+) and ATP.

It localises to the nucleus. It catalyses the reaction [protein]-peptidylproline (omega=180) = [protein]-peptidylproline (omega=0). Inhibited by both FK506 and rapamycin. Functionally, PPIases accelerate the folding of proteins. It catalyzes the cis-trans isomerization of proline imidic peptide bonds in oligopeptides. Binds double-stranded DNA in vitro. The protein is 46 kDa FK506-binding nuclear protein (FKBP46) of Spodoptera frugiperda (Fall armyworm).